A 217-amino-acid polypeptide reads, in one-letter code: TLD domain-containing protein 2 (217 aa).

A disordered region spans residues 1 to 48; sequence MKSLRWRYTRLPSQVEDALSGEEDKEEEEEKEEETTPAPTPVPEHPMV. The span at 19-35 shows a compositional bias: acidic residues; that stretch reads LSGEEDKEEEEEKEEET. Residues 56-217 enclose the TLDc domain; it reads QVLGASEMSQ…ISELEAWVLS (162 aa).

It belongs to the OXR1 family.

The polypeptide is TLD domain-containing protein 2 (TLDC2) (Bos taurus (Bovine)).